A 269-amino-acid polypeptide reads, in one-letter code: 4-hydroxy-tetrahydrodipicolinate reductase (269 aa).

Residues 8–13 (GASGRM), glutamate 34, 98–100 (GTT), and 122–125 (APNM) contribute to the NAD(+) site. Catalysis depends on histidine 155, which acts as the Proton donor/acceptor. Residue histidine 156 participates in (S)-2,3,4,5-tetrahydrodipicolinate binding. The active-site Proton donor is the lysine 159. Residue 165–166 (GT) coordinates (S)-2,3,4,5-tetrahydrodipicolinate.

It belongs to the DapB family.

The protein resides in the cytoplasm. The catalysed reaction is (S)-2,3,4,5-tetrahydrodipicolinate + NAD(+) + H2O = (2S,4S)-4-hydroxy-2,3,4,5-tetrahydrodipicolinate + NADH + H(+). The enzyme catalyses (S)-2,3,4,5-tetrahydrodipicolinate + NADP(+) + H2O = (2S,4S)-4-hydroxy-2,3,4,5-tetrahydrodipicolinate + NADPH + H(+). It participates in amino-acid biosynthesis; L-lysine biosynthesis via DAP pathway; (S)-tetrahydrodipicolinate from L-aspartate: step 4/4. Catalyzes the conversion of 4-hydroxy-tetrahydrodipicolinate (HTPA) to tetrahydrodipicolinate. The protein is 4-hydroxy-tetrahydrodipicolinate reductase of Desulfotalea psychrophila (strain LSv54 / DSM 12343).